The primary structure comprises 357 residues: UDP-N-acetylglucosamine--N-acetylmuramyl-(pentapeptide) pyrophosphoryl-undecaprenol N-acetylglucosamine transferase (357 aa).

UDP-N-acetyl-alpha-D-glucosamine-binding positions include 10–12 (TGG), N124, S189, I244, and Q289.

Belongs to the glycosyltransferase 28 family. MurG subfamily.

Its subcellular location is the cell membrane. It catalyses the reaction Mur2Ac(oyl-L-Ala-gamma-D-Glu-L-Lys-D-Ala-D-Ala)-di-trans,octa-cis-undecaprenyl diphosphate + UDP-N-acetyl-alpha-D-glucosamine = beta-D-GlcNAc-(1-&gt;4)-Mur2Ac(oyl-L-Ala-gamma-D-Glu-L-Lys-D-Ala-D-Ala)-di-trans,octa-cis-undecaprenyl diphosphate + UDP + H(+). It participates in cell wall biogenesis; peptidoglycan biosynthesis. Functionally, cell wall formation. Catalyzes the transfer of a GlcNAc subunit on undecaprenyl-pyrophosphoryl-MurNAc-pentapeptide (lipid intermediate I) to form undecaprenyl-pyrophosphoryl-MurNAc-(pentapeptide)GlcNAc (lipid intermediate II). The protein is UDP-N-acetylglucosamine--N-acetylmuramyl-(pentapeptide) pyrophosphoryl-undecaprenol N-acetylglucosamine transferase of Lactococcus lactis subsp. cremoris (strain MG1363).